The sequence spans 225 residues: UPF0758 protein Ssed_0385 (225 aa).

Residues 102 to 224 (ILSDPDLTRD…IVSFAERGWI (123 aa)) form the MPN domain. 3 residues coordinate Zn(2+): H173, H175, and D186. The short motif at 173–186 (HNHPSGVAEPSLAD) is the JAMM motif element.

Belongs to the UPF0758 family.

The polypeptide is UPF0758 protein Ssed_0385 (Shewanella sediminis (strain HAW-EB3)).